The sequence spans 422 residues: 26S proteasome non-ATPase regulatory subunit 11 (422 aa).

Ala2 is subject to N-acetylalanine. A phosphoserine mark is found at Ser14 and Ser23. One can recognise a PCI domain in the interval 224–392 (DWKTAYSYFY…GVLIIFDEPP (169 aa)). Lys274 participates in a covalent cross-link: Glycyl lysine isopeptide (Lys-Gly) (interchain with G-Cter in SUMO2).

Belongs to the proteasome subunit S9 family. In terms of assembly, component of the 19S proteasome regulatory particle complex. The 26S proteasome consists of a 20S core particle (CP) and two 19S regulatory subunits (RP). The regulatory particle is made of a lid composed of 9 subunits including PSMD11, a base containing 6 ATPases and few additional components.

Functionally, component of the 26S proteasome, a multiprotein complex involved in the ATP-dependent degradation of ubiquitinated proteins. This complex plays a key role in the maintenance of protein homeostasis by removing misfolded or damaged proteins, which could impair cellular functions, and by removing proteins whose functions are no longer required. Therefore, the proteasome participates in numerous cellular processes, including cell cycle progression, apoptosis, or DNA damage repair. In the complex, PSMD11 is required for proteasome assembly. Plays a key role in increased proteasome activity in embryonic stem cells (ESCs): its high expression in ESCs promotes enhanced assembly of the 26S proteasome, followed by higher proteasome activity. The chain is 26S proteasome non-ATPase regulatory subunit 11 (Psmd11) from Mus musculus (Mouse).